Reading from the N-terminus, the 61-residue chain is Small ribosomal subunit protein uS14 (61 aa).

The Zn(2+) site is built by Cys24, Cys27, Cys40, and Cys43.

The protein belongs to the universal ribosomal protein uS14 family. Zinc-binding uS14 subfamily. In terms of assembly, part of the 30S ribosomal subunit. Contacts proteins S3 and S10. Requires Zn(2+) as cofactor.

Functionally, binds 16S rRNA, required for the assembly of 30S particles and may also be responsible for determining the conformation of the 16S rRNA at the A site. This is Small ribosomal subunit protein uS14 from Roseiflexus castenholzii (strain DSM 13941 / HLO8).